The chain runs to 131 residues: Replicase polyprotein 1ab (131 aa).

Residues 1-128 enclose the Nidovirus-type SAM-dependent 2'-O-MTase domain; the sequence is ITEFSWNKYL…KLLNFGNHFI (128 aa).

Its function is as follows. The replicase polyprotein of coronaviruses is a multifunctional protein: it contains the activities necessary for the transcription of negative stranded RNA, leader RNA, subgenomic mRNAs and progeny virion RNA as well as proteinases responsible for the cleavage of the polyprotein into functional products. The chain is Replicase polyprotein 1ab (rep) from Sus scrofa (Pig).